Consider the following 181-residue polypeptide: Large ribosomal subunit protein eL18 (181 aa).

The tract at residues 152–181 (WGKAPGQRGSHSAPYVRSEGRKFERAHGLK) is disordered. Positions 169-181 (SEGRKFERAHGLK) are enriched in basic and acidic residues.

The protein belongs to the eukaryotic ribosomal protein eL18 family.

The protein localises to the cytoplasm. This Tetrahymena thermophila protein is Large ribosomal subunit protein eL18 (RPL18).